The chain runs to 395 residues: F-box/kelch-repeat protein At4g39570 (395 aa).

Basic residues predominate over residues 1-25 (MSSPERKRKRVTSTKNPSVKKKKKI). Residues 1 to 29 (MSSPERKRKRVTSTKNPSVKKKKKISPVP) are disordered. Residues 29–75 (PTPIPSLPDDLLVSIFARVSRLYYPILSLVSKSFRSLLRSPELYETR) enclose the F-box domain. Kelch repeat units follow at residues 150–197 (DIYF…VIDG) and 198–246 (KIYV…RSAY).

This is F-box/kelch-repeat protein At4g39570 from Arabidopsis thaliana (Mouse-ear cress).